The chain runs to 349 residues: Leukotriene B4 receptor 1 (349 aa).

The Extracellular segment spans residues 1 to 19; that stretch reads MNTTSPAAPSSSGVSFISL. Asparagine 2 is a glycosylation site (N-linked (GlcNAc...) asparagine). The helical transmembrane segment at 20-42 threads the bilayer; that stretch reads LVIIVLSVALAVGLPGNSFVVWS. Residues 43-54 lie on the Cytoplasmic side of the membrane; sequence ILAKLRKRSVTA. The chain crosses the membrane as a helical span at residues 55-75; that stretch reads LMVLHLALADLAVLLTAPFFL. Over 76–91 the chain is Extracellular; it reads YSVAQGTWTFGLSSCR. Residues 92-113 traverse the membrane as a helical segment; that stretch reads LFHYVCGVSMYASVLLIMTMSL. At 114 to 138 the chain is on the cytoplasmic side; the sequence is DRSLAVALPFVSQKLRTKAVAWRVL. The helical transmembrane segment at 139–159 threads the bilayer; sequence AGIWVMSVLLATPVLLYRTVH. At 160-179 the chain is on the extracellular side; it reads LGLNNRSLTCFLKYPSERHR. Asparagine 164 carries N-linked (GlcNAc...) asparagine glycosylation. A helical membrane pass occupies residues 180–200; sequence AFHLFFEVITGFLLPFLVVVA. The Cytoplasmic portion of the chain corresponds to 201-222; it reads SYCDIGRRLRARRFRRSRRTGR. The chain crosses the membrane as a helical span at residues 223 to 243; it reads LVALIILAFAAFWLPYHVVNL. Residues 244-269 are Extracellular-facing; it reads AEGFRAAAGKALGSGPVGRRLLLARH. A helical transmembrane segment spans residues 270 to 290; sequence VLITLAFLSSSVNPLLYACAG. At 291-349 the chain is on the cytoplasmic side; the sequence is GGLLRSAGVGFIAKLLEGTGSETSSSRRKGTLAQTLRGTPASPEPDPAESLTASTNPLE. The tract at residues 311-349 is disordered; the sequence is SETSSSRRKGTLAQTLRGTPASPEPDPAESLTASTNPLE.

It belongs to the G-protein coupled receptor 1 family. In terms of processing, phosphorylated by GRK6 upon leukotriene B4 binding; which promotes desensitization.

Its subcellular location is the cell membrane. Its function is as follows. Receptor for extracellular ATP &gt; UTP and ADP. The activity of this receptor is mediated by G proteins which activate a phosphatidylinositol-calcium second messenger system. May be the cardiac P2Y receptor involved in the regulation of cardiac muscle contraction through modulation of L-type calcium currents. Is a receptor for leukotriene B4, a potent chemoattractant involved in inflammation and immune response. The sequence is that of Leukotriene B4 receptor 1 (LTB4R) from Bos taurus (Bovine).